The primary structure comprises 380 residues: Cytochrome b (380 aa).

4 helical membrane passes run 34-54, 78-99, 114-134, and 179-199; these read FGSL…LLAM, WLIR…YLHI, WNTG…GYVL, and FFAL…IHLT. Heme b contacts are provided by His84 and His98. 2 residues coordinate heme b: His183 and His197. His202 is an a ubiquinone binding site. Transmembrane regions (helical) follow at residues 227–247, 289–309, 321–341, and 348–368; these read LKDI…ALFS, LGGV…PFLH, LSQL…WVGS, and FIII…ILFP.

This sequence belongs to the cytochrome b family. In terms of assembly, the cytochrome bc1 complex contains 11 subunits: 3 respiratory subunits (MT-CYB, CYC1 and UQCRFS1), 2 core proteins (UQCRC1 and UQCRC2) and 6 low-molecular weight proteins (UQCRH/QCR6, UQCRB/QCR7, UQCRQ/QCR8, UQCR10/QCR9, UQCR11/QCR10 and a cleavage product of UQCRFS1). This cytochrome bc1 complex then forms a dimer. Heme b is required as a cofactor.

It is found in the mitochondrion inner membrane. Its function is as follows. Component of the ubiquinol-cytochrome c reductase complex (complex III or cytochrome b-c1 complex) that is part of the mitochondrial respiratory chain. The b-c1 complex mediates electron transfer from ubiquinol to cytochrome c. Contributes to the generation of a proton gradient across the mitochondrial membrane that is then used for ATP synthesis. The chain is Cytochrome b (MT-CYB) from Macronectes halli (Hall's giant petrel).